The chain runs to 104 residues: uncharacterized protein (104 aa).

Its subcellular location is the mitochondrion. This is an uncharacterized protein from Claviceps purpurea (Ergot fungus).